The primary structure comprises 166 residues: Protein FAM163B (166 aa).

Residues V6–C26 form a helical membrane-spanning segment. Phosphoserine is present on S40.

Belongs to the FAM163 family.

It localises to the membrane. This chain is Protein FAM163B (FAM163B), found in Homo sapiens (Human).